The primary structure comprises 118 residues: V-type proton ATPase subunit G 2 (118 aa).

The tract at residues 26–90 (RKRKARRLKQ…VQGMQSSQQR (65 aa)) is disordered. Positions 35 to 55 (QAKEEAQMEVEQYRREREQEF) are enriched in basic and acidic residues. 2 stretches are compositionally biased toward polar residues: residues 56-69 (QSKQQAAMGSQGNL) and 78-89 (RRQVQGMQSSQQ).

It belongs to the V-ATPase G subunit family. V-ATPase is a heteromultimeric enzyme made up of two complexes: the ATP-hydrolytic V1 complex and the proton translocation V0 complex. The V1 complex consists of three catalytic AB heterodimers that form a heterohexamer, three peripheral stalks each consisting of EG heterodimers, one central rotor including subunits D and F, and the regulatory subunits C and H. The proton translocation complex V0 consists of the proton transport subunit a, a ring of proteolipid subunits c9c'', rotary subunit d, subunits e and f, and the accessory subunits ATP6AP1/Ac45 and ATP6AP2/PRR.

It localises to the melanosome. It is found in the cytoplasmic vesicle. The protein resides in the clathrin-coated vesicle membrane. Its function is as follows. Subunit of the V1 complex of vacuolar(H+)-ATPase (V-ATPase), a multisubunit enzyme composed of a peripheral complex (V1) that hydrolyzes ATP and a membrane integral complex (V0) that translocates protons. V-ATPase is responsible for acidifying and maintaining the pH of intracellular compartments and in some cell types, is targeted to the plasma membrane, where it is responsible for acidifying the extracellular environment. The sequence is that of V-type proton ATPase subunit G 2 (ATP6V1G2) from Sus scrofa (Pig).